Reading from the N-terminus, the 482-residue chain is ATP synthase subunit beta (482 aa).

162–169 (GGAGVGKT) contributes to the ATP binding site.

The protein belongs to the ATPase alpha/beta chains family. In terms of assembly, F-type ATPases have 2 components, CF(1) - the catalytic core - and CF(0) - the membrane proton channel. CF(1) has five subunits: alpha(3), beta(3), gamma(1), delta(1), epsilon(1). CF(0) has four main subunits: a(1), b(1), b'(1) and c(9-12).

The protein localises to the cellular thylakoid membrane. It catalyses the reaction ATP + H2O + 4 H(+)(in) = ADP + phosphate + 5 H(+)(out). Functionally, produces ATP from ADP in the presence of a proton gradient across the membrane. The catalytic sites are hosted primarily by the beta subunits. The polypeptide is ATP synthase subunit beta (Nostoc punctiforme (strain ATCC 29133 / PCC 73102)).